A 1237-amino-acid chain; its full sequence is ATP-dependent RNA helicase DEAH13 (1237 aa).

Disordered regions lie at residues 1–51 and 115–148; these read MASV…NSNV and AMQL…EPTT. Residues 24 to 38 show a composition bias toward polar residues; the sequence is SNKMQDKLNSNNNTG. Residues 131–143 show a composition bias toward acidic residues; that stretch reads SVEQNDNDDDSCM. The region spanning 251–443 is the Helicase ATP-binding domain; sequence MEAINRHPAV…KRLFPNIPPL (193 aa). Residue 264–271 participates in ATP binding; sequence GQTGCGKT. Positions 367–370 match the DEAH box motif; that stretch reads DEAH. A disordered region spans residues 543-585; that stretch reads DDDSNNQNSRFSSHGEDPSDIGDGNYDDDFEEEDMYESDEDRD. The segment covering 567–585 has biased composition (acidic residues); sequence NYDDDFEEEDMYESDEDRD. One can recognise a Helicase C-terminal domain in the interval 605–776; sequence ALRAAFNALA…GVILLMKSMN (172 aa). The tract at residues 876-910 is disordered; the sequence is EKKNESKDADKTVKQEDKQRKKDRKEKIKAARDRF.

It belongs to the DEAD box helicase family. DEAH subfamily.

It carries out the reaction ATP + H2O = ADP + phosphate + H(+). The protein is ATP-dependent RNA helicase DEAH13 of Arabidopsis thaliana (Mouse-ear cress).